A 131-amino-acid chain; its full sequence is Profilin-1 (131 aa).

It belongs to the profilin family. In terms of assembly, occurs in many kinds of cells as a complex with monomeric actin in a 1:1 ratio.

The protein resides in the cytoplasm. It localises to the cytoskeleton. Its function is as follows. Binds to actin and affects the structure of the cytoskeleton. At high concentrations, profilin prevents the polymerization of actin, whereas it enhances it at low concentrations. By binding to PIP2, it inhibits the formation of IP3 and DG. This Hordeum vulgare (Barley) protein is Profilin-1 (PRO1).